The primary structure comprises 1057 residues: Carbamoyl phosphate synthase large chain (1057 aa).

The interval 1–401 (MPKRNDIKTI…SLLKAIRSLE (401 aa)) is carboxyphosphate synthetic domain. The ATP site is built by Arg-129, Arg-169, Gly-175, Gly-176, Lys-208, Ile-210, Glu-215, Gly-241, Ile-242, His-243, Gln-284, and Glu-298. An ATP-grasp 1 domain is found at 133 to 327 (RTLMNYLNVP…IAKLAAKIAV (195 aa)). 3 residues coordinate Mg(2+): Gln-284, Glu-298, and Asn-300. Gln-284, Glu-298, and Asn-300 together coordinate Mn(2+). An oligomerization domain region spans residues 402–546 (YGVHHLGLPN…YGTYETENES (145 aa)). The carbamoyl phosphate synthetic domain stretch occupies residues 547-929 (IITDKEKILV…ALFKGLTGSG (383 aa)). The ATP-grasp 2 domain maps to 671–861 (EALLRKINVP…MAQLAMRAII (191 aa)). Residues Arg-707, Arg-746, Leu-748, Glu-752, Gly-777, Val-778, His-779, Ser-780, Gln-820, and Glu-832 each coordinate ATP. Mg(2+) contacts are provided by Gln-820, Glu-832, and Asn-834. Gln-820, Glu-832, and Asn-834 together coordinate Mn(2+). The 128-residue stretch at 930–1057 (VEVKDHGTVL…ESMTFTMRQM (128 aa)) folds into the MGS-like domain. The tract at residues 930-1057 (VEVKDHGTVL…ESMTFTMRQM (128 aa)) is allosteric domain.

It belongs to the CarB family. As to quaternary structure, composed of two chains; the small (or glutamine) chain promotes the hydrolysis of glutamine to ammonia, which is used by the large (or ammonia) chain to synthesize carbamoyl phosphate. Tetramer of heterodimers (alpha,beta)4. Mg(2+) serves as cofactor. Requires Mn(2+) as cofactor.

It carries out the reaction hydrogencarbonate + L-glutamine + 2 ATP + H2O = carbamoyl phosphate + L-glutamate + 2 ADP + phosphate + 2 H(+). It catalyses the reaction hydrogencarbonate + NH4(+) + 2 ATP = carbamoyl phosphate + 2 ADP + phosphate + 2 H(+). Its pathway is amino-acid biosynthesis; L-arginine biosynthesis; carbamoyl phosphate from bicarbonate: step 1/1. The protein operates within pyrimidine metabolism; UMP biosynthesis via de novo pathway; (S)-dihydroorotate from bicarbonate: step 1/3. Large subunit of the glutamine-dependent carbamoyl phosphate synthetase (CPSase). CPSase catalyzes the formation of carbamoyl phosphate from the ammonia moiety of glutamine, carbonate, and phosphate donated by ATP, constituting the first step of 2 biosynthetic pathways, one leading to arginine and/or urea and the other to pyrimidine nucleotides. The large subunit (synthetase) binds the substrates ammonia (free or transferred from glutamine from the small subunit), hydrogencarbonate and ATP and carries out an ATP-coupled ligase reaction, activating hydrogencarbonate by forming carboxy phosphate which reacts with ammonia to form carbamoyl phosphate. This is Carbamoyl phosphate synthase large chain from Staphylococcus aureus (strain bovine RF122 / ET3-1).